A 397-amino-acid chain; its full sequence is Riboflavin biosynthesis protein RibBA (397 aa).

The DHBP synthase stretch occupies residues 1-199 (MFHRIEEALE…IEDLIAYRRH (199 aa)). D-ribulose 5-phosphate is bound by residues 26-27 (RE), Asp31, 138-142 (RAGHT), and Glu162. Residue Glu27 participates in Mg(2+) binding. Residue His141 coordinates Mg(2+). The segment at 200–397 (HETLVTREVE…VNKLGHLLNL (198 aa)) is GTP cyclohydrolase II. 250–254 (RVHSE) contacts GTP. Zn(2+)-binding residues include Cys255, Cys266, and Cys268. GTP contacts are provided by residues Gln271, 293–295 (EGR), and Thr315. Catalysis depends on Asp327, which acts as the Proton acceptor; for GTP cyclohydrolase activity. Arg329 functions as the Nucleophile; for GTP cyclohydrolase activity in the catalytic mechanism. The GTP site is built by Thr350 and Lys355.

It in the N-terminal section; belongs to the DHBP synthase family. In the C-terminal section; belongs to the GTP cyclohydrolase II family. Mg(2+) is required as a cofactor. Mn(2+) serves as cofactor. Requires Zn(2+) as cofactor.

The catalysed reaction is D-ribulose 5-phosphate = (2S)-2-hydroxy-3-oxobutyl phosphate + formate + H(+). It carries out the reaction GTP + 4 H2O = 2,5-diamino-6-hydroxy-4-(5-phosphoribosylamino)-pyrimidine + formate + 2 phosphate + 3 H(+). It functions in the pathway cofactor biosynthesis; riboflavin biosynthesis; 2-hydroxy-3-oxobutyl phosphate from D-ribulose 5-phosphate: step 1/1. It participates in cofactor biosynthesis; riboflavin biosynthesis; 5-amino-6-(D-ribitylamino)uracil from GTP: step 1/4. In terms of biological role, catalyzes the conversion of D-ribulose 5-phosphate to formate and 3,4-dihydroxy-2-butanone 4-phosphate. Its function is as follows. Catalyzes the conversion of GTP to 2,5-diamino-6-ribosylamino-4(3H)-pyrimidinone 5'-phosphate (DARP), formate and pyrophosphate. The sequence is that of Riboflavin biosynthesis protein RibBA from Bacillus cereus (strain AH187).